Consider the following 248-residue polypeptide: Ribonuclease PH (248 aa).

Phosphate-binding positions include arginine 86 and glycine 124–arginine 126.

Belongs to the RNase PH family. In terms of assembly, homohexameric ring arranged as a trimer of dimers.

The enzyme catalyses tRNA(n+1) + phosphate = tRNA(n) + a ribonucleoside 5'-diphosphate. Phosphorolytic 3'-5' exoribonuclease that plays an important role in tRNA 3'-end maturation. Removes nucleotide residues following the 3'-CCA terminus of tRNAs; can also add nucleotides to the ends of RNA molecules by using nucleoside diphosphates as substrates, but this may not be physiologically important. Probably plays a role in initiation of 16S rRNA degradation (leading to ribosome degradation) during starvation. This chain is Ribonuclease PH, found in Listeria welshimeri serovar 6b (strain ATCC 35897 / DSM 20650 / CCUG 15529 / CIP 8149 / NCTC 11857 / SLCC 5334 / V8).